We begin with the raw amino-acid sequence, 118 residues long: Putative membrane protein insertion efficiency factor (118 aa).

The tract at residues 76–118 is disordered; the sequence is WDPVPQRRPRRRDAAAADAAMSAPHACKGSPHAVVGDTNDGST. Low complexity predominate over residues 91 to 101; it reads AADAAMSAPHA.

This sequence belongs to the UPF0161 family.

It localises to the cell membrane. Functionally, could be involved in insertion of integral membrane proteins into the membrane. The sequence is that of Putative membrane protein insertion efficiency factor from Nocardia farcinica (strain IFM 10152).